A 154-amino-acid polypeptide reads, in one-letter code: Transcriptional repressor NrdR (154 aa).

The segment at C3–C34 is a zinc-finger region. Residues P49–E139 enclose the ATP-cone domain.

Belongs to the NrdR family. Zn(2+) is required as a cofactor.

In terms of biological role, negatively regulates transcription of bacterial ribonucleotide reductase nrd genes and operons by binding to NrdR-boxes. The sequence is that of Transcriptional repressor NrdR from Pseudomonas entomophila (strain L48).